Consider the following 291-residue polypeptide: ATP synthase gamma chain (291 aa).

Belongs to the ATPase gamma chain family. F-type ATPases have 2 components, CF(1) - the catalytic core - and CF(0) - the membrane proton channel. CF(1) has five subunits: alpha(3), beta(3), gamma(1), delta(1), epsilon(1). CF(0) has three main subunits: a, b and c.

The protein localises to the cell inner membrane. In terms of biological role, produces ATP from ADP in the presence of a proton gradient across the membrane. The gamma chain is believed to be important in regulating ATPase activity and the flow of protons through the CF(0) complex. The polypeptide is ATP synthase gamma chain (Verminephrobacter eiseniae (strain EF01-2)).